The primary structure comprises 296 residues: Uridine phosphorylase A (296 aa).

Residues Gly-46, Arg-77, and 121–124 (RLGT) each bind phosphate. Uridine is bound by residues 125–126 (SG) and 201–203 (QGR).

It belongs to the PNP/UDP phosphorylase family. As to quaternary structure, homodimer.

The enzyme catalyses uridine + phosphate = alpha-D-ribose 1-phosphate + uracil. It functions in the pathway pyrimidine metabolism; UMP biosynthesis via salvage pathway; uracil from uridine (phosphorylase route): step 1/1. In terms of biological role, catalyzes the reversible phosphorylytic cleavage of uridine and deoxyuridine to uracil and ribose- or deoxyribose-1-phosphate. The produced molecules are then utilized as carbon and energy sources or in the rescue of pyrimidine bases for nucleotide synthesis. In Schistosoma mansoni (Blood fluke), this protein is Uridine phosphorylase A.